Reading from the N-terminus, the 188-residue chain is ATP synthase subunit b 2 (188 aa).

The chain crosses the membrane as a helical span at residues 41–61 (FFWLVISFGFFYFFIARVIVP).

This sequence belongs to the ATPase B chain family. In terms of assembly, F-type ATPases have 2 components, F(1) - the catalytic core - and F(0) - the membrane proton channel. F(1) has five subunits: alpha(3), beta(3), gamma(1), delta(1), epsilon(1). F(0) has three main subunits: a(1), b(2) and c(10-14). The alpha and beta chains form an alternating ring which encloses part of the gamma chain. F(1) is attached to F(0) by a central stalk formed by the gamma and epsilon chains, while a peripheral stalk is formed by the delta and b chains.

It localises to the cell inner membrane. Its function is as follows. F(1)F(0) ATP synthase produces ATP from ADP in the presence of a proton or sodium gradient. F-type ATPases consist of two structural domains, F(1) containing the extramembraneous catalytic core and F(0) containing the membrane proton channel, linked together by a central stalk and a peripheral stalk. During catalysis, ATP synthesis in the catalytic domain of F(1) is coupled via a rotary mechanism of the central stalk subunits to proton translocation. Functionally, component of the F(0) channel, it forms part of the peripheral stalk, linking F(1) to F(0). The b'-subunit is a diverged and duplicated form of b found in plants and photosynthetic bacteria. The sequence is that of ATP synthase subunit b 2 (atpF2) from Bartonella bacilliformis (strain ATCC 35685 / KC583 / Herrer 020/F12,63).